We begin with the raw amino-acid sequence, 229 residues long: DNA mismatch repair protein MutH (229 aa).

This sequence belongs to the MutH family.

The protein resides in the cytoplasm. Functionally, sequence-specific endonuclease that cleaves unmethylated GATC sequences. It is involved in DNA mismatch repair. In Shigella boydii serotype 18 (strain CDC 3083-94 / BS512), this protein is DNA mismatch repair protein MutH.